We begin with the raw amino-acid sequence, 99 residues long: METLSFEFPAGQPPKGRALVGVVGSGDLEVLLEPGKPGTLSIQVVTSVNGAALRWQHLFERMFDGQTPPALSIDIHDFGATPGVVRMRLEQGFEEIGHD.

The residue at position 25 (serine 25) is an O-(phosphoribosyl dephospho-coenzyme A)serine.

The protein belongs to the MdcC family. In terms of processing, covalently binds the prosthetic group of malonate decarboxylase.

Its subcellular location is the cytoplasm. Functionally, subunit of malonate decarboxylase, it is an acyl carrier protein to which acetyl and malonyl thioester residues are bound via a 2'-(5''-phosphoribosyl)-3'-dephospho-CoA prosthetic group and turn over during the catalytic mechanism. The polypeptide is Malonate decarboxylase acyl carrier protein (Pseudomonas syringae pv. syringae (strain B728a)).